A 1035-amino-acid chain; its full sequence is MESTPPPDDCSVKVAVHIRPLIGDERIQGCQDCVTVVTGKPQVQIGSHSFTFDHVYGSSGSPSTEMYEECAAPLVDGLFQGYNATVLAYGQTGSGKTYTMGTGCGDSSQTGIIPQVMNALFTKIETLKQQIEFQIHVSFIEIHKEEVQDLLDPCTVNKSDTNNTGHVGKVAHVPGKPPIQIRETSNGVITLAGSTEVSVSTLKEMAACLDQGSVSRATGSTNMNNQSSRSHAIFTITVEQMRKINTDSPENGAYNGSLKEEYLCAKLHLVDLAGSERAKRTGSDGLRFKEGVHINKGLLALGNVISALGDEKKRKDGAHVPYRDSKLTRLLQDSLGGNSRTVMIACISPADINAEETLNTLKYANRARNIRNKPVVNRDPVSSEMLKMRQQVEYLQAELSLRTGGSSCAEVQALKERIVWLETANEELCRELHEYRSRCPGVEHSEKDFKDIRADDIVGSVRPDGLKRSLHSIESSNYPMVEATTGDSREIDEEAKEWEHKLLQNSMDKELYELNRRLEEKESEMKLFDGYDPAALKQHFGKKIAEVEDEKRSVQEERNRLLAEIENLASDGQAQKLQDVHAQNLKALEAQILDLKKKQESQVQLLKQKQKSDDAARRLQDEIQSIKAQKVQLQHRMKQEAEQFRQWKASREKELLQLRKEGRKSEYERHKLQALNQRQKMVLQRKTEEAAMATKRLKELLEARKSSPREHSAGTNGFGTNGQTNEKSLQRWLDHELEVMVNVHEVRHEYEKQSHVRAALAEELAVLRQVDEFAVKGLSPPRGKNGFARASSLSPNARMARISSLENMLVISSNSLVAMASQLSEAEERERAFTNRGRWNQLRSMGEAKNLLQYMFNSLAETRCQLWEKDVEIKEMKDQFKEIVGLLRQSELRRKEAEKELKLREQAIATSLGTPPSSVKHVAEDLSTPSPMTVPAQKQLKFTPGIANGKVRGPAAFLDTNKKMVPMGQVSMRKLSAVGKQGGRLWRWKRSHHQWIVQFKWKWQKPWRLSEWIRTSDETLLKSKPRLKALPNKIM.

Positions 11-370 (SVKVAVHIRP…LKYANRARNI (360 aa)) constitute a Kinesin motor domain. Residue 90 to 97 (GQTGSGKT) participates in ATP binding. Coiled coils occupy residues 408–436 (CAEV…HEYR), 504–707 (QNSM…RKSS), and 881–911 (KEIV…IATS). A disordered region spans residues 704–724 (RKSSPREHSAGTNGFGTNGQT).

This sequence belongs to the TRAFAC class myosin-kinesin ATPase superfamily. Kinesin family. KIN-4 subfamily. Homodimer. In terms of tissue distribution, expressed in stems and flowers. Detected in cells undergoing secondary wall deposition including developing interfascicular fibers and xylem cells, but also in dividing cells and expanding/elongating parenchyma cells.

Its subcellular location is the cytoplasm. The protein localises to the cytoskeleton. In terms of biological role, kinesin-like motor protein involved in the control of the oriented deposition of cellulose microfibrils. Its motor activity is directed toward the microtubule's plus end. It possesses the potential to drive long-distance transport of cargo along cortical microtubules. Regulates cell wall mechanics during cell elongation, by the regulation of primary and secondary walls deposition. Contributes to cortical microtubule-mediated trafficking of cell wall components. The polypeptide is Kinesin-like protein KIN-4A (Arabidopsis thaliana (Mouse-ear cress)).